The sequence spans 318 residues: Trans-prenyltransferase (318 aa).

A helical membrane pass occupies residues 1–21; sequence MLHLIYISIIVVLIIILISYT. Positions 85, 88, and 122 each coordinate isopentenyl diphosphate. 2 residues coordinate Mg(2+): aspartate 129 and aspartate 135. Position 140 (arginine 140) interacts with dimethylallyl diphosphate. Arginine 141 is a binding site for isopentenyl diphosphate. Residues lysine 216, threonine 217, and glutamine 254 each coordinate dimethylallyl diphosphate.

It belongs to the FPP/GGPP synthase family. Asfivirus trans-prenyltransferase subfamily. The cofactor is Mg(2+).

It is found in the host endoplasmic reticulum. It localises to the host membrane. The enzyme catalyses isopentenyl diphosphate + dimethylallyl diphosphate = (2E)-geranyl diphosphate + diphosphate. It catalyses the reaction isopentenyl diphosphate + (2E)-geranyl diphosphate = (2E,6E)-farnesyl diphosphate + diphosphate. The catalysed reaction is isopentenyl diphosphate + (2E,6E)-farnesyl diphosphate = (2E,6E,10E)-geranylgeranyl diphosphate + diphosphate. It carries out the reaction isopentenyl diphosphate + (2E,6E,10E)-geranylgeranyl diphosphate = (2E,6E,10E,14E)-geranylfarnesyl diphosphate + diphosphate. It participates in isoprenoid biosynthesis; farnesyl diphosphate biosynthesis; farnesyl diphosphate from geranyl diphosphate and isopentenyl diphosphate: step 1/1. Its pathway is isoprenoid biosynthesis; geranyl diphosphate biosynthesis; geranyl diphosphate from dimethylallyl diphosphate and isopentenyl diphosphate: step 1/1. The protein operates within isoprenoid biosynthesis; geranylgeranyl diphosphate biosynthesis; geranylgeranyl diphosphate from farnesyl diphosphate and isopentenyl diphosphate: step 1/1. Its function is as follows. Trans-prenyltransferase that catalyzes the sequential condensation of isopentenyl diphosphate (IPP) with different allylic diphosphates, such as dimethylallyl diphosphate (DMAPP), geranyl diphosphate (GPP), farnesyl diphosphate (FPP) and geranylgeranyl diphosphate (GGPP), farnesyl diphosphate being the best allylic substrate. This African swine fever virus (strain Badajoz 1971 Vero-adapted) (Ba71V) protein is Trans-prenyltransferase.